The following is a 142-amino-acid chain: Potassium voltage-gated channel subfamily E regulatory beta subunit 5 (142 aa).

2 N-linked (GlcNAc...) asparagine glycosylation sites follow: Asn-2 and Asn-25. The helical transmembrane segment at 61–81 (LYILLIMIFYACLAGGLILAY) threads the bilayer. The Cytoplasmic portion of the chain corresponds to 82-142 (TRSRKLVEAK…PALAQGAERV (61 aa)). Positions 119–142 (SQAEGRRQLASEGLPALAQGAERV) are disordered.

It belongs to the potassium channel KCNE family. Interacts with KCNQ1; impairs KCNQ1 localization in lipid rafts and only conducts current upon strong and continued depolarization. Highly expressed in heart, skeletal muscle, brain, spinal cord and placenta.

The protein localises to the membrane. In terms of biological role, potassium channel ancillary subunit that is essential for generation of some native K(+) currents by virtue of formation of heteromeric ion channel complex with voltage-gated potassium (Kv) channel pore-forming alpha subunits. Functions as an inhibitory beta-subunit of the repolarizing cardiac potassium ion channel KCNQ1. This chain is Potassium voltage-gated channel subfamily E regulatory beta subunit 5 (KCNE5), found in Homo sapiens (Human).